The chain runs to 223 residues: uncharacterized protein (223 aa).

The Tyr recombinase domain occupies 29–220 (KQTYKMFKED…AKEILKNIGD (192 aa)). Catalysis depends on residues R71, K103, H170, R173, and H196. The O-(3'-phospho-DNA)-tyrosine intermediate role is filled by Y205.

Belongs to the 'phage' integrase family.

This is an uncharacterized protein from Methanocaldococcus jannaschii (strain ATCC 43067 / DSM 2661 / JAL-1 / JCM 10045 / NBRC 100440) (Methanococcus jannaschii).